The primary structure comprises 244 residues: Uridylate kinase (244 aa).

ATP is bound at residue 18–21 (KVSG). Gly-60 contacts UMP. ATP-binding residues include Gly-61 and Arg-65. UMP-binding positions include Asp-80 and 141–148 (TGNPFCTT). Residues Thr-168, Gln-169, Tyr-174, and Asp-177 each coordinate ATP.

It belongs to the UMP kinase family. Homohexamer.

It localises to the cytoplasm. The enzyme catalyses UMP + ATP = UDP + ADP. The protein operates within pyrimidine metabolism; CTP biosynthesis via de novo pathway; UDP from UMP (UMPK route): step 1/1. Its activity is regulated as follows. Inhibited by UTP. In terms of biological role, catalyzes the reversible phosphorylation of UMP to UDP. This is Uridylate kinase from Rickettsia typhi (strain ATCC VR-144 / Wilmington).